The primary structure comprises 354 residues: Inositol-tetrakisphosphate 1-kinase 1 (354 aa).

Over residues 1–16 (MRVHEEASEDKEREVE) the composition is skewed to basic and acidic residues. Residues 1 to 24 (MRVHEEASEDKEREVEEAPDLMPL) form a disordered region. K53 and K95 together coordinate 1D-myo-inositol 1,3,4-trisphosphate. ATP-binding residues include R130 and K180. One can recognise an ATP-grasp domain in the interval 140–347 (LNLSNAYGEV…FLLSLVQNKY (208 aa)). Residues H191 and K223 each coordinate 1D-myo-inositol 1,3,4-trisphosphate. ATP-binding positions include 212–223 (QEFVNHGGILFK) and S238. Mg(2+) is bound by residues D303, D318, and N320. Position 320 (N320) interacts with 1D-myo-inositol 1,3,4-trisphosphate.

The protein belongs to the ITPK1 family. As to quaternary structure, monomer. Mg(2+) is required as a cofactor. In terms of tissue distribution, expressed in roots, leaves, flowers, anthers and embryos.

The catalysed reaction is 1D-myo-inositol 3,4,5,6-tetrakisphosphate + ATP = 1D-myo-inositol 1,3,4,5,6-pentakisphosphate + ADP + H(+). It catalyses the reaction 1D-myo-inositol 1,3,4-trisphosphate + ATP = 1D-myo-inositol 1,3,4,5-tetrakisphosphate + ADP + H(+). The enzyme catalyses 1D-myo-inositol 1,3,4-trisphosphate + ATP = 1D-myo-inositol 1,3,4,6-tetrakisphosphate + ADP + H(+). Functionally, kinase that can phosphorylate various inositol polyphosphate such as Ins(3,4,5,6)P4 or Ins(1,3,4)P3 and participates in phytic acid biosynthesis in developing seeds. Phytic acid is the primary storage form of phosphorus in cereal grains and other plant seeds. This is Inositol-tetrakisphosphate 1-kinase 1 from Oryza sativa subsp. japonica (Rice).